The sequence spans 198 residues: Guanylate kinase (198 aa).

Residues 6-192 (KSIVIFTGPS…AAQEIREILH (187 aa)) form the Guanylate kinase-like domain. 13–20 (GPSGVGKG) lines the ATP pocket.

Belongs to the guanylate kinase family.

The protein localises to the cytoplasm. It catalyses the reaction GMP + ATP = GDP + ADP. Its function is as follows. Essential for recycling GMP and indirectly, cGMP. The polypeptide is Guanylate kinase (Mycoplasmopsis synoviae (strain 53) (Mycoplasma synoviae)).